We begin with the raw amino-acid sequence, 153 residues long: MKLNELYNNIGAKKNKKRIARGIGSGKGKTGGRGIKGQKSRSGVAIKGFEGGQTPIIKRLPKRGFNCISTKKYNIINIYNIEEALADGRLSADDNITKEKLVEARVVNNKNNKKLVKLLSICSDDFAAPLSLKLDAYSSKAKDLIEKAGGKLL.

The tract at residues Arg21–Arg41 is disordered. A compositionally biased stretch (gly residues) spans Ile23–Ile35.

The protein belongs to the universal ribosomal protein uL15 family. Part of the 50S ribosomal subunit.

Functionally, binds to the 23S rRNA. The protein is Large ribosomal subunit protein uL15 of Rickettsia africae (strain ESF-5).